We begin with the raw amino-acid sequence, 95 residues long: Integration host factor subunit beta (95 aa).

Belongs to the bacterial histone-like protein family. In terms of assembly, heterodimer of an alpha and a beta chain.

This protein is one of the two subunits of integration host factor, a specific DNA-binding protein that functions in genetic recombination as well as in transcriptional and translational control. This is Integration host factor subunit beta from Shewanella halifaxensis (strain HAW-EB4).